We begin with the raw amino-acid sequence, 417 residues long: 4-hydroxy-3-methylbut-2-enyl diphosphate reductase (417 aa).

Cys56 provides a ligand contact to [4Fe-4S] cluster. Residue His86 coordinates (2E)-4-hydroxy-3-methylbut-2-enyl diphosphate. Dimethylallyl diphosphate is bound at residue His86. His86 contributes to the isopentenyl diphosphate binding site. Residue Cys151 coordinates [4Fe-4S] cluster. His179 contacts (2E)-4-hydroxy-3-methylbut-2-enyl diphosphate. Residue His179 coordinates dimethylallyl diphosphate. His179 contacts isopentenyl diphosphate. The active-site Proton donor is Glu181. Thr244 is a binding site for (2E)-4-hydroxy-3-methylbut-2-enyl diphosphate. Cys282 serves as a coordination point for [4Fe-4S] cluster. Positions 311, 312, 313, and 374 each coordinate (2E)-4-hydroxy-3-methylbut-2-enyl diphosphate. Residues Ser311, Ser312, Asn313, and Ser374 each coordinate dimethylallyl diphosphate. Ser311, Ser312, Asn313, and Ser374 together coordinate isopentenyl diphosphate.

The protein belongs to the IspH family. The cofactor is [4Fe-4S] cluster.

It carries out the reaction isopentenyl diphosphate + 2 oxidized [2Fe-2S]-[ferredoxin] + H2O = (2E)-4-hydroxy-3-methylbut-2-enyl diphosphate + 2 reduced [2Fe-2S]-[ferredoxin] + 2 H(+). The catalysed reaction is dimethylallyl diphosphate + 2 oxidized [2Fe-2S]-[ferredoxin] + H2O = (2E)-4-hydroxy-3-methylbut-2-enyl diphosphate + 2 reduced [2Fe-2S]-[ferredoxin] + 2 H(+). Its pathway is isoprenoid biosynthesis; dimethylallyl diphosphate biosynthesis; dimethylallyl diphosphate from (2E)-4-hydroxy-3-methylbutenyl diphosphate: step 1/1. It participates in isoprenoid biosynthesis; isopentenyl diphosphate biosynthesis via DXP pathway; isopentenyl diphosphate from 1-deoxy-D-xylulose 5-phosphate: step 6/6. Functionally, catalyzes the conversion of 1-hydroxy-2-methyl-2-(E)-butenyl 4-diphosphate (HMBPP) into a mixture of isopentenyl diphosphate (IPP) and dimethylallyl diphosphate (DMAPP). Acts in the terminal step of the DOXP/MEP pathway for isoprenoid precursor biosynthesis. This is 4-hydroxy-3-methylbut-2-enyl diphosphate reductase from Gloeobacter violaceus (strain ATCC 29082 / PCC 7421).